We begin with the raw amino-acid sequence, 341 residues long: N-acetyl-gamma-glutamyl-phosphate reductase (341 aa).

C147 is an active-site residue.

This sequence belongs to the NAGSA dehydrogenase family. Type 1 subfamily.

Its subcellular location is the cytoplasm. The catalysed reaction is N-acetyl-L-glutamate 5-semialdehyde + phosphate + NADP(+) = N-acetyl-L-glutamyl 5-phosphate + NADPH + H(+). Its pathway is amino-acid biosynthesis; L-arginine biosynthesis; N(2)-acetyl-L-ornithine from L-glutamate: step 3/4. Its function is as follows. Catalyzes the NADPH-dependent reduction of N-acetyl-5-glutamyl phosphate to yield N-acetyl-L-glutamate 5-semialdehyde. The polypeptide is N-acetyl-gamma-glutamyl-phosphate reductase (Dehalococcoides mccartyi (strain CBDB1)).